The chain runs to 303 residues: Target of rapamycin complex subunit LST8 (303 aa).

7 WD repeats span residues 1 to 27, 30 to 68, 73 to 112, 114 to 153, 157 to 196, 205 to 244, and 248 to 287; these read MSVILVSAGYDHTIRFWEALTGVCSRT, HSDSQVNRLEITNDKKLLATAGHQNVRLYDIRTTNPNPV, GHRGNVTSVSFQQDNRWMVTSSEDGTIKVWDVRSPSIPRN, KHNAPVNEVVIHPNQGELISCDRDGNIRIWDLGENQCTHQ, EDDTSLQSLSMASDGSMLAAANTKGNCYVWEMPNHTDASH, AHSTYITRILLSSDVKHLATCSADHTARVWSIDDDFKLET, and GHQRWVWDCAFSADSAYLVTASSDHYVRLWDLSTREIVRQ.

The protein belongs to the WD repeat LST8 family. In terms of assembly, the target of rapamycin complex 1 (TORC1) is composed of at least KOG1, LST8, TCO89 and either TOR1 (TORC1-A) or TOR2 (TORC1-B). TORC1 binds to and is inhibited by FKBP-rapamycin. Interacts with PIB2; following activation of PIB2 by glutamine or cysteine and as part of the TORC1 complex. The target of rapamycin complex 2 (TORC2) is composed of at least AVO1, AVO2, BIT61, LST8, TOR2 and TSC11. TORC2 forms a homodimer. Contrary to TORC1, TORC2 does not bind to and is not sensitive to FKBP-rapamycin. LST8 binds to the C-terminal kinase domain in TOR2.

Its subcellular location is the cell membrane. The protein localises to the vacuole membrane. Its function is as follows. Essential component of both TORC1 and TORC2. TORC1 regulates multiple cellular processes to control cell growth in response to environmental signals. Nutrient limitation and environmental stress signals cause inactivation of TORC1. Active TORC1 positively controls ribosome biogenesis via control of rRNA, ribosomal protein and tRNA gene expression, and rRNA processing. TORC1 positively controls protein biosynthesis by regulation of mRNA stability, translation initiation factor activity, and high-affinity amino acid permeases that serve to provide amino acids for use by the translation machinery. TORC1 also promotes growth by sequestering a number of nutrient and general stress-responsive transcription factors in the cytoplasm. TORC1 negatively controls macroautophagy, a process to recycle surplus cytoplasmic mass under nutrient starvation conditions. LST8 is involved in the negative regulation of transcription factors GLN3 and RTG1-RTG3, limiting the synthesis of alpha-ketoglutarate, glutamate and glutamine. LST8 is required for targeting of amino acid permeases (AAPs) to the plasma membrane. TORC2 regulates cell cycle-dependent polarization of the actin-cytoskeleton, cell wall integrity, and receptor endocytosis. TORC2 controls polarity of the actin cytoskeleton, which is required for orienting the secretory pathway toward discrete growth sites, via the RHO1/PKC1/MAPK cell integrity pathway. LST8 is involved in maintenance of cell wall integrity. LST8 modulates TOR2 kinase activity. The chain is Target of rapamycin complex subunit LST8 from Saccharomyces cerevisiae (strain ATCC 204508 / S288c) (Baker's yeast).